A 606-amino-acid chain; its full sequence is Gamma-aminobutyric acid receptor subunit beta (606 aa).

The first 44 residues, 1–44 (MSDSKMDKLARMAPLPRTPLLTIWLAINMALIAQETGHKRIHTV), serve as a signal peptide directing secretion. Over 45-268 (QAATGGGSML…CEIQFVRSMG (224 aa)) the chain is Extracellular. Residue Asn58 is glycosylated (N-linked (GlcNAc...) asparagine). A disulfide bridge links Cys185 with Cys199. A glycan (N-linked (GlcNAc...) asparagine) is linked at Asn253. The next 3 helical transmembrane spans lie at 269–291 (YYLI…SFWL), 297–316 (PARV…LMSS), and 333–356 (YLGT…YMAK). At 357-568 (RIQMRKQRFM…LGITPSDIDK (212 aa)) the chain is on the cytoplasmic side. Disordered regions lie at residues 376–451 (KQQL…VSNR) and 482–542 (HDPK…AAVP). The span at 381 to 395 (GANQQQANPNPNANV) shows a compositional bias: low complexity. The segment covering 396–425 (GGPGGVGVGPGGPGGPGGGVNVGVGMGMGP) has biased composition (gly residues). Over residues 430-443 (GHGHHAHSHGHPHA) the composition is skewed to basic residues. Positions 499-536 (GGRGGPQSHGPGPGQGGGPPGGGGGGGGGGGPPEGGGD) are enriched in gly residues. A helical transmembrane segment spans residues 569 to 590 (YSRIVFPVCFVCFNLMYWIIYL).

This sequence belongs to the ligand-gated ion channel (TC 1.A.9) family. Gamma-aminobutyric acid receptor (TC 1.A.9.5) subfamily.

The protein resides in the postsynaptic cell membrane. It localises to the cell membrane. GABA, an inhibitory neurotransmitter, mediates neuronal inhibition by binding to the GABA receptor and opening an integral chloride channel. The protein is Gamma-aminobutyric acid receptor subunit beta (Rdl) of Drosophila simulans (Fruit fly).